Consider the following 316-residue polypeptide: Annexin D7 (316 aa).

The residue at position 2 (Ala-2) is an N-acetylalanine. Annexin repeat units lie at residues 11 to 82 (PLPE…LWTF), 83 to 154 (EPAE…PLVS), 166 to 237 (TLAR…AVIK), and 241 to 312 (YPEK…ALLG). Ca(2+) contacts are provided by Phe-24, Gly-26, Gly-28, and Glu-68. Position 95 is a phosphoserine (Ser-95). Thr-100 and Thr-112 each carry phosphothreonine. Phosphotyrosine is present on Tyr-129. 2 residues coordinate Ca(2+): Ile-254 and Gly-258. Position 283 is a phosphotyrosine (Tyr-283). Ser-288 bears the Phosphoserine mark. Positions 298, 299, and 304 each coordinate Ca(2+).

It belongs to the annexin (TC 1.A.31.1) family. In terms of tissue distribution, expressed in flowers.

This Arabidopsis thaliana (Mouse-ear cress) protein is Annexin D7 (ANNAT7).